The following is a 242-amino-acid chain: Ribonuclease PH (242 aa).

Residues R90 and 128–130 contribute to the phosphate site; that span reads GTR.

This sequence belongs to the RNase PH family. As to quaternary structure, homohexameric ring arranged as a trimer of dimers.

It catalyses the reaction tRNA(n+1) + phosphate = tRNA(n) + a ribonucleoside 5'-diphosphate. Its function is as follows. Phosphorolytic 3'-5' exoribonuclease that plays an important role in tRNA 3'-end maturation. Removes nucleotide residues following the 3'-CCA terminus of tRNAs; can also add nucleotides to the ends of RNA molecules by using nucleoside diphosphates as substrates, but this may not be physiologically important. Probably plays a role in initiation of 16S rRNA degradation (leading to ribosome degradation) during starvation. This is Ribonuclease PH from Nocardioides sp. (strain ATCC BAA-499 / JS614).